The chain runs to 74 residues: Conotoxin ca17a (74 aa).

An N-terminal signal peptide occupies residues 1–20 (MQKATVLLLALLLLLPLSTA). A propeptide spanning residues 21-40 (QDAEGSQEDAAQREVDIATR) is cleaved from the precursor. Position 51 is a 4-hydroxyproline (proline 51).

Contains disulfide bonds. Expressed by the venom gland.

Its subcellular location is the secreted. This is Conotoxin ca17a from Conus caracteristicus (Characteristic cone).